We begin with the raw amino-acid sequence, 183 residues long: Large ribosomal subunit protein uL18 (183 aa).

It belongs to the universal ribosomal protein uL18 family. Part of the 50S ribosomal subunit. Contacts the 5S and 23S rRNAs.

Its function is as follows. This is one of the proteins that bind and probably mediate the attachment of the 5S RNA into the large ribosomal subunit, where it forms part of the central protuberance. This chain is Large ribosomal subunit protein uL18, found in Halobacterium salinarum (strain ATCC 29341 / DSM 671 / R1).